Reading from the N-terminus, the 82-residue chain is Small ribosomal subunit protein uS17 (82 aa).

The protein belongs to the universal ribosomal protein uS17 family. As to quaternary structure, part of the 30S ribosomal subunit.

Its function is as follows. One of the primary rRNA binding proteins, it binds specifically to the 5'-end of 16S ribosomal RNA. In Nitrobacter hamburgensis (strain DSM 10229 / NCIMB 13809 / X14), this protein is Small ribosomal subunit protein uS17.